The following is a 142-amino-acid chain: Endoribonuclease YbeY (142 aa).

Zn(2+) is bound by residues H100, H104, and H110.

The protein belongs to the endoribonuclease YbeY family. Zn(2+) serves as cofactor.

The protein localises to the cytoplasm. Functionally, single strand-specific metallo-endoribonuclease involved in late-stage 70S ribosome quality control and in maturation of the 3' terminus of the 16S rRNA. This chain is Endoribonuclease YbeY, found in Helicobacter pylori (strain G27).